The sequence spans 398 residues: uncharacterized protein (398 aa).

6 consecutive transmembrane segments (helical) span residues 37–57, 92–112, 122–142, 186–206, 228–248, and 268–288; these read LVIL…FVQF, IFNA…FIFG, LLTL…SYIP, LFYG…ILII, IGGI…VIGT, and FGVA…NIVL.

It is found in the cell membrane. This is an uncharacterized protein from Mycoplasma genitalium (strain ATCC 33530 / DSM 19775 / NCTC 10195 / G37) (Mycoplasmoides genitalium).